Here is a 59-residue protein sequence, read N- to C-terminus: Cecropin-A (59 aa).

The N-terminal stretch at 1–23 (MNFTKLFLLIAMAVLLLTGQSEA) is a signal peptide. Residues 58 to 59 (GK) constitute a propeptide, removed in mature form (AeaeCec2).

Hemolymph (at protein level).

It is found in the secreted. Its function is as follows. Antimicrobial peptide. Antibacterial activity against Gram-negative bacteria E.coli D22 and D31, E.carotovora, K.pneumoniae, P.aeruginosa, S.typhimurium, E.cloacae B12 and X.campestris and Gram-positive bacteria A.viridans, M.luteus, B.megaterium and S.pyogenes. Possesses antifungal activity against F.oxysporum, F.culmorum and N.crassa, C.albicans, C.neoformans and S.cerevisiae. No activity against Gram-negative S.marcescens Db11, Gram-positive B.cereus, B.subtilis, B.thuringiensis, S.aureus and L.monocytogenes, the fungi A.fumigatus and B.bassiana and C.glabrata. Partially neutralizes lipopolysaccharides (LPS). Exhibits anti-inflammatory properties: inhibits LPS-induced iNOS/NOS2 transcription, nitric oxide (NO) and pro-inflammatory cytokine production in mouse macrophages and human peripheral blood mononuclear cells (PBMCs); inhibits LPS-induced activation of MAPK and NF-kappa-B signaling pathways in mouse macrophages. The sequence is that of Cecropin-A (CECA) from Aedes aegypti (Yellowfever mosquito).